Consider the following 247-residue polypeptide: Chromosome partition protein MukE (247 aa).

The segment at 213-247 (AQSLQEEKNGLKDNMDQSAVENEQYFENEENEGIA) is disordered. Basic and acidic residues predominate over residues 217 to 227 (QEEKNGLKDNM). The span at 236 to 247 (QYFENEENEGIA) shows a compositional bias: acidic residues.

Belongs to the MukE family. Interacts, and probably forms a ternary complex, with MukF and MukB. The complex formation is stimulated by calcium or magnesium.

It localises to the cytoplasm. It is found in the nucleoid. Functionally, involved in chromosome condensation, segregation and cell cycle progression. May participate in facilitating chromosome segregation by condensation DNA from both sides of a centrally located replisome during cell division. Probably acts via its interaction with MukB and MukF. This Histophilus somni (strain 2336) (Haemophilus somnus) protein is Chromosome partition protein MukE.